The sequence spans 270 residues: Meiotic recombination 1 protein (270 aa).

The KH domain occupies 191 to 225; that stretch reads EIKLNKTQITFLIGAKGTRIESLREKSGASIKIIP.

Its function is as follows. Required for chromosome pairing and genetic recombination. MER1 may function to bring the axial elements of the synaptonemal complex corresponding to homologous chromosomes together by initiating recombination. MER1 might be responsible for regulating the MER2 gene and/or gene product. The polypeptide is Meiotic recombination 1 protein (MER1) (Saccharomyces cerevisiae (strain ATCC 204508 / S288c) (Baker's yeast)).